We begin with the raw amino-acid sequence, 120 residues long: Small ribosomal subunit protein uS11 (120 aa).

Belongs to the universal ribosomal protein uS11 family. As to quaternary structure, part of the 30S ribosomal subunit. Interacts with proteins S7 and S18. Binds to IF-3.

Functionally, located on the platform of the 30S subunit, it bridges several disparate RNA helices of the 16S rRNA. Forms part of the Shine-Dalgarno cleft in the 70S ribosome. This is Small ribosomal subunit protein uS11 from Neorickettsia sennetsu (strain ATCC VR-367 / Miyayama) (Ehrlichia sennetsu).